Consider the following 234-residue polypeptide: MKNAFRFKQFEIDQTGCAMRINTDGVLLGAVAGKNEAANILDIGTGTGVIALMLAQRFPNALVDAVEIDEQAALTATKNALNAPFSGRLKVLHSAIEDYLPEKYYDLIVSNPPYFVNDLKNPEHRKGVARHTDAHFFEQLLERVAAMLSRDGRFWFILPLKQAQNIVDMAKFYGLGMAVVLHIHSDENKPEIRQIVCLDYSGQPAHHHNLYIYAGKGLYTDAYKVLLKDFFLAF.

Belongs to the methyltransferase superfamily. tRNA (adenine-N(6)-)-methyltransferase family.

It is found in the cytoplasm. The catalysed reaction is adenosine(37) in tRNA1(Val) + S-adenosyl-L-methionine = N(6)-methyladenosine(37) in tRNA1(Val) + S-adenosyl-L-homocysteine + H(+). In terms of biological role, specifically methylates the adenine in position 37 of tRNA(1)(Val) (anticodon cmo5UAC). The sequence is that of tRNA1(Val) (adenine(37)-N6)-methyltransferase from Pedobacter heparinus (strain ATCC 13125 / DSM 2366 / CIP 104194 / JCM 7457 / NBRC 12017 / NCIMB 9290 / NRRL B-14731 / HIM 762-3).